Consider the following 156-residue polypeptide: Biotin carboxyl carrier protein of acetyl-CoA carboxylase (156 aa).

Residues 73–156 (PAAAEISGHI…EFDEPLVVIE (84 aa)) enclose the Biotinyl-binding domain. The residue at position 122 (Lys122) is an N6-biotinyllysine.

Homodimer.

The protein operates within lipid metabolism; fatty acid biosynthesis. In terms of biological role, this protein is a component of the acetyl coenzyme A carboxylase complex; first, biotin carboxylase catalyzes the carboxylation of the carrier protein and then the transcarboxylase transfers the carboxyl group to form malonyl-CoA. The protein is Biotin carboxyl carrier protein of acetyl-CoA carboxylase (accB) of Escherichia coli O6:H1 (strain CFT073 / ATCC 700928 / UPEC).